We begin with the raw amino-acid sequence, 242 residues long: Uridylate kinase (242 aa).

ATP-binding positions include 15–18 (KISG), Gly-58, and Arg-62. Residues Asp-77 and 139-146 (TGNPFFTT) contribute to the UMP site. ATP contacts are provided by Thr-166, Tyr-172, and Asp-175.

This sequence belongs to the UMP kinase family. Homohexamer.

The protein localises to the cytoplasm. The enzyme catalyses UMP + ATP = UDP + ADP. The protein operates within pyrimidine metabolism; CTP biosynthesis via de novo pathway; UDP from UMP (UMPK route): step 1/1. With respect to regulation, inhibited by UTP. Its function is as follows. Catalyzes the reversible phosphorylation of UMP to UDP. The sequence is that of Uridylate kinase from Buchnera aphidicola subsp. Acyrthosiphon pisum (strain APS) (Acyrthosiphon pisum symbiotic bacterium).